A 659-amino-acid polypeptide reads, in one-letter code: Methionine--tRNA ligase (659 aa).

The 'HIGH' region signature appears at 13 to 23 (YYPSGNLHIGH). The 'KMSKS' region motif lies at 308–312 (KMSKS). An ATP-binding site is contributed by K311. The tRNA-binding domain maps to 559–659 (DFDKVEIKAA…SAIPNGAVIK (101 aa)).

The protein belongs to the class-I aminoacyl-tRNA synthetase family. MetG type 2B subfamily. Homodimer.

It localises to the cytoplasm. It carries out the reaction tRNA(Met) + L-methionine + ATP = L-methionyl-tRNA(Met) + AMP + diphosphate. Functionally, is required not only for elongation of protein synthesis but also for the initiation of all mRNA translation through initiator tRNA(fMet) aminoacylation. The polypeptide is Methionine--tRNA ligase (Staphylococcus haemolyticus (strain JCSC1435)).